The primary structure comprises 677 residues: UvrABC system protein B (677 aa).

In terms of domain architecture, Helicase ATP-binding spans 24–412 (EGVLEGVPAQ…EGIVVEQVIR (389 aa)). 37–44 (GVTGSGKT) is an ATP binding site. Positions 90-113 (YYDYYQPEAYLPSSDTYIEKDLAI) match the Beta-hairpin motif. Positions 429 to 591 (QIDDLMEEIQ…ITPQQIKKAR (163 aa)) constitute a Helicase C-terminal domain. The region spanning 635–670 (EKSMERTRKLMQEAAKKLEFIEAAQYRDELLKMEDL) is the UVR domain.

The protein belongs to the UvrB family. In terms of assembly, forms a heterotetramer with UvrA during the search for lesions. Interacts with UvrC in an incision complex.

It localises to the cytoplasm. In terms of biological role, the UvrABC repair system catalyzes the recognition and processing of DNA lesions. A damage recognition complex composed of 2 UvrA and 2 UvrB subunits scans DNA for abnormalities. Upon binding of the UvrA(2)B(2) complex to a putative damaged site, the DNA wraps around one UvrB monomer. DNA wrap is dependent on ATP binding by UvrB and probably causes local melting of the DNA helix, facilitating insertion of UvrB beta-hairpin between the DNA strands. Then UvrB probes one DNA strand for the presence of a lesion. If a lesion is found the UvrA subunits dissociate and the UvrB-DNA preincision complex is formed. This complex is subsequently bound by UvrC and the second UvrB is released. If no lesion is found, the DNA wraps around the other UvrB subunit that will check the other stand for damage. The chain is UvrABC system protein B from Bacteroides fragilis (strain ATCC 25285 / DSM 2151 / CCUG 4856 / JCM 11019 / LMG 10263 / NCTC 9343 / Onslow / VPI 2553 / EN-2).